The primary structure comprises 222 residues: CCA-adding enzyme (222 aa).

Positions 50 and 53 each coordinate ATP. Positions 50 and 53 each coordinate CTP. Residues Asp-61, Asp-63, and Asp-112 each coordinate Mg(2+). ATP-binding residues include His-135, Lys-155, and Tyr-164. Positions 135, 155, and 164 each coordinate CTP.

Belongs to the tRNA nucleotidyltransferase/poly(A) polymerase family. Archaeal CCA-adding enzyme subfamily. Homodimer. It depends on Mg(2+) as a cofactor.

It catalyses the reaction a tRNA precursor + 2 CTP + ATP = a tRNA with a 3' CCA end + 3 diphosphate. The enzyme catalyses a tRNA with a 3' CCA end + 2 CTP + ATP = a tRNA with a 3' CCACCA end + 3 diphosphate. Functionally, catalyzes the addition and repair of the essential 3'-terminal CCA sequence in tRNAs without using a nucleic acid template. Adds these three nucleotides in the order of C, C, and A to the tRNA nucleotide-73, using CTP and ATP as substrates and producing inorganic pyrophosphate. tRNA 3'-terminal CCA addition is required both for tRNA processing and repair. Also involved in tRNA surveillance by mediating tandem CCA addition to generate a CCACCA at the 3' terminus of unstable tRNAs. While stable tRNAs receive only 3'-terminal CCA, unstable tRNAs are marked with CCACCA and rapidly degraded. This is CCA-adding enzyme from Thermoplasma acidophilum.